The chain runs to 181 residues: Large ribosomal subunit protein uL10 (181 aa).

Belongs to the universal ribosomal protein uL10 family. Part of the ribosomal stalk of the 50S ribosomal subunit. The N-terminus interacts with L11 and the large rRNA to form the base of the stalk. The C-terminus forms an elongated spine to which L12 dimers bind in a sequential fashion forming a multimeric L10(L12)X complex.

Functionally, forms part of the ribosomal stalk, playing a central role in the interaction of the ribosome with GTP-bound translation factors. The polypeptide is Large ribosomal subunit protein uL10 (Acidobacterium capsulatum (strain ATCC 51196 / DSM 11244 / BCRC 80197 / JCM 7670 / NBRC 15755 / NCIMB 13165 / 161)).